Consider the following 360-residue polypeptide: Phospho-N-acetylmuramoyl-pentapeptide-transferase (360 aa).

Helical transmembrane passes span 20 to 40 (YITF…FFFG), 71 to 91 (TPTM…LLWA), 93 to 113 (LDNG…AIGF), 134 to 154 (LLIG…LHPA), 168 to 188 (ALIN…LGAA), 199 to 219 (GLAI…AYMV), 239 to 259 (LAVF…YNAP), 263 to 283 (VFMG…IAVV), 288 to 308 (IVLA…IIQV), and 337 to 357 (QIVI…LATL).

Belongs to the glycosyltransferase 4 family. MraY subfamily. Mg(2+) is required as a cofactor.

The protein localises to the cell inner membrane. The catalysed reaction is UDP-N-acetyl-alpha-D-muramoyl-L-alanyl-gamma-D-glutamyl-meso-2,6-diaminopimeloyl-D-alanyl-D-alanine + di-trans,octa-cis-undecaprenyl phosphate = di-trans,octa-cis-undecaprenyl diphospho-N-acetyl-alpha-D-muramoyl-L-alanyl-D-glutamyl-meso-2,6-diaminopimeloyl-D-alanyl-D-alanine + UMP. It functions in the pathway cell wall biogenesis; peptidoglycan biosynthesis. In terms of biological role, catalyzes the initial step of the lipid cycle reactions in the biosynthesis of the cell wall peptidoglycan: transfers peptidoglycan precursor phospho-MurNAc-pentapeptide from UDP-MurNAc-pentapeptide onto the lipid carrier undecaprenyl phosphate, yielding undecaprenyl-pyrophosphoryl-MurNAc-pentapeptide, known as lipid I. This is Phospho-N-acetylmuramoyl-pentapeptide-transferase from Paracoccus denitrificans (strain Pd 1222).